The chain runs to 145 residues: Small ribosomal subunit protein uS15 (145 aa).

Belongs to the universal ribosomal protein uS15 family. Part of the 30S ribosomal subunit.

This chain is Small ribosomal subunit protein uS15, found in Thermoplasma acidophilum (strain ATCC 25905 / DSM 1728 / JCM 9062 / NBRC 15155 / AMRC-C165).